A 186-amino-acid chain; its full sequence is Elongation factor P (186 aa).

Belongs to the elongation factor P family.

The protein resides in the cytoplasm. The protein operates within protein biosynthesis; polypeptide chain elongation. Functionally, involved in peptide bond synthesis. Stimulates efficient translation and peptide-bond synthesis on native or reconstituted 70S ribosomes in vitro. Probably functions indirectly by altering the affinity of the ribosome for aminoacyl-tRNA, thus increasing their reactivity as acceptors for peptidyl transferase. This chain is Elongation factor P, found in Shewanella sp. (strain ANA-3).